The primary structure comprises 197 residues: dTTP/UTP pyrophosphatase (197 aa).

Asp-70 acts as the Proton acceptor in catalysis.

The protein belongs to the Maf family. YhdE subfamily. It depends on a divalent metal cation as a cofactor.

Its subcellular location is the cytoplasm. The catalysed reaction is dTTP + H2O = dTMP + diphosphate + H(+). It carries out the reaction UTP + H2O = UMP + diphosphate + H(+). In terms of biological role, nucleoside triphosphate pyrophosphatase that hydrolyzes dTTP and UTP. May have a dual role in cell division arrest and in preventing the incorporation of modified nucleotides into cellular nucleic acids. In Methanosarcina mazei (strain ATCC BAA-159 / DSM 3647 / Goe1 / Go1 / JCM 11833 / OCM 88) (Methanosarcina frisia), this protein is dTTP/UTP pyrophosphatase.